The chain runs to 115 residues: NADH-ubiquinone oxidoreductase chain 3 (115 aa).

Helical transmembrane passes span 3 to 23 (VMLA…IAFW), 55 to 75 (FFLV…LLPL), and 84 to 104 (LPTM…SLAY).

The protein belongs to the complex I subunit 3 family. In terms of assembly, core subunit of respiratory chain NADH dehydrogenase (Complex I) which is composed of 45 different subunits. Interacts with TMEM186. Interacts with TMEM242.

Its subcellular location is the mitochondrion inner membrane. It carries out the reaction a ubiquinone + NADH + 5 H(+)(in) = a ubiquinol + NAD(+) + 4 H(+)(out). Its function is as follows. Core subunit of the mitochondrial membrane respiratory chain NADH dehydrogenase (Complex I) which catalyzes electron transfer from NADH through the respiratory chain, using ubiquinone as an electron acceptor. Essential for the catalytic activity of complex I. The polypeptide is NADH-ubiquinone oxidoreductase chain 3 (Felis catus (Cat)).